The primary structure comprises 571 residues: FAD-linked oxidoreductase patO (571 aa).

Residues Met1 to Gly23 form the signal peptide. N-linked (GlcNAc...) asparagine glycosylation is found at Asn47, Asn101, Asn125, Asn179, Asn341, Asn374, Asn380, Asn421, Asn445, and Asn480. The FAD-binding PCMH-type domain occupies Thr115 to Asp294.

Belongs to the oxygen-dependent FAD-linked oxidoreductase family. It depends on FAD as a cofactor.

The protein localises to the vacuole lumen. The protein operates within mycotoxin biosynthesis; patulin biosynthesis. FAD-linked oxidoreductase; part of the gene cluster that mediates the biosynthesis of patulin, an acetate-derived tetraketide mycotoxin produced by several fungal species that shows antimicrobial properties against several bacteria. PatO acts with patJ in the vacuole to convert gentisyl alcohol to isoepoxydon. The pathway begins with the synthesis of 6-methylsalicylic acid by the polyketide synthase (PKS) patK via condensation of acetate and malonate units. The 6-methylsalicylic acid decarboxylase patG then catalyzes the decarboxylation of 6-methylsalicylic acid to yield m-cresol (also known as 3-methylphenol). These first reactions occur in the cytosol. The intermediate m-cresol is then transported into the endoplasmic reticulum where the cytochrome P450 monooxygenase patH converts it to m-hydroxybenzyl alcohol, which is further converted to gentisyl alcohol by the cytochrome P450 monooxygenase patI. The oxidoreductases patJ and patO further convert gentisyl alcohol to isoepoxydon in the vacuole. PatN catalyzes then the transformation of isoepoxydon into phyllostine. The cluster protein patF is responsible for the conversion from phyllostine to neopatulin whereas the alcohol dehydrogenase patD converts neopatulin to E-ascladiol. The steps between isoepoxydon and E-ascladiol occur in the cytosol, and E-ascladiol is probably secreted to the extracellular space by one of the cluster-specific transporters patC or patM. Finally, the secreted patulin synthase patE catalyzes the conversion of E-ascladiol to patulin. This Penicillium expansum (Blue mold rot fungus) protein is FAD-linked oxidoreductase patO.